Reading from the N-terminus, the 71-residue chain is Brevinin-1V (71 aa).

The signal sequence occupies residues 1 to 22 (MFTLKKSLLLLFFLGTINLSLC). Positions 23–45 (EQERDADEEERRDDSEERDIEVE) are excised as a propeptide. C65 and C71 form a disulfide bridge.

It belongs to the frog skin active peptide (FSAP) family. Brevinin subfamily. In terms of tissue distribution, expressed by the skin glands.

It is found in the secreted. Its function is as follows. Has antimicrobial activity against Gram-positive bacteria and fungi but has weak or no activity against a range of Gram-negative bacteria except P.faecalis. Active against the Gram-positive bacteria E.faecium 091299 (MIC=37.5 uM), S.aureus ATCC 25923 (MIC=2.4 uM), S.carnosus KHS (MIC=19 uM), B.licheniformis X39 (MIC=2.4 uM) and R.rhodochrous X15 (MIC=1.2 uM) and a lower activity against E.faecalis 981 (MIC=75 uM). Active against the Gram-negative bacterium P.faecalis X29 (MIC=9.5 uM) is virtually inactive against E.coli ATCC 25922 (MIC=150 uM), and inactive against P.aeruginosa and S.typhi. Has antifungal activity against C.albicans ATCC 2002 (MIC=9.5 uM) and is also active against the slime mold 090223 (MIC=1.2 uM). Has low hemolytic activity against human erythrocytes (LC(50)=75 uM). The protein is Brevinin-1V of Odorrana hainanensis (Odor frog).